The sequence spans 397 residues: MKVIDGTIASPLGFSADGLHAGFKKRKMDFGWIVSEKPASVAGVYTTNKVIAAPLIVTKTSVKKAGKMRAIVVNSGVANSCTGTQGLEDAYTMQEWTAEKLGVEPDMIGVASTGIIGELLPMDTLKNGLSKLVVNGNANDFAKAILTTDTATKTIAVTETFGRDVVTMAGVAKGSGMIHPNMATMLGFITCDANISSDTLQLALSQNVEKTFNQITVDGDTSTNDMVLVMSNGCALNDEILPDTPEFDKFSKMLNFVMQELAKKIAKDGEGANKLIQVDVVNAPNALDARMMAKSVVGSSLVKTAIFGEDPNWGRILAAVGYAGVDVPVDNVDIMIGGLPVMLASSPVTFDDEEMKDIMHGDEVTITVDLHSGQEKGTAWGCDLSYDYVKINALYHT.

6 residues coordinate substrate: T147, K173, T184, E270, N392, and T397. The Nucleophile role is filled by T184.

Belongs to the ArgJ family. Heterotetramer of two alpha and two beta chains.

The protein resides in the cytoplasm. The enzyme catalyses N(2)-acetyl-L-ornithine + L-glutamate = N-acetyl-L-glutamate + L-ornithine. It catalyses the reaction L-glutamate + acetyl-CoA = N-acetyl-L-glutamate + CoA + H(+). It participates in amino-acid biosynthesis; L-arginine biosynthesis; L-ornithine and N-acetyl-L-glutamate from L-glutamate and N(2)-acetyl-L-ornithine (cyclic): step 1/1. It functions in the pathway amino-acid biosynthesis; L-arginine biosynthesis; N(2)-acetyl-L-ornithine from L-glutamate: step 1/4. Catalyzes two activities which are involved in the cyclic version of arginine biosynthesis: the synthesis of N-acetylglutamate from glutamate and acetyl-CoA as the acetyl donor, and of ornithine by transacetylation between N(2)-acetylornithine and glutamate. The chain is Arginine biosynthesis bifunctional protein ArgJ from Streptococcus thermophilus (strain ATCC BAA-250 / LMG 18311).